We begin with the raw amino-acid sequence, 461 residues long: D-phenylhydantoinase (461 aa).

A divalent metal cation contacts are provided by histidine 59, histidine 61, and lysine 151. Lysine 151 carries the post-translational modification N6-carboxylysine. Residue tyrosine 156 participates in substrate binding. A divalent metal cation is bound by residues histidine 182 and histidine 239. Serine 286 serves as a coordination point for substrate. Residue aspartate 313 coordinates a divalent metal cation. Asparagine 335 contacts substrate.

This sequence belongs to the metallo-dependent hydrolases superfamily. Hydantoinase/dihydropyrimidinase family. As to quaternary structure, homotetramer. It depends on a divalent metal cation as a cofactor. Post-translationally, carboxylation allows a single lysine to coordinate two divalent metal cations.

It carries out the reaction D-5-phenylhydantoin + H2O = N-carbamoyl-D-phenylglycine + H(+). Functionally, catalyzes the stereospecific hydrolysis of the cyclic amide bond of D-hydantoin derivatives with an aromatic side chains at the 5'-position. Has no activity on dihydropyrimidines. The physiological function is unknown. In Escherichia coli O17:K52:H18 (strain UMN026 / ExPEC), this protein is D-phenylhydantoinase.